Reading from the N-terminus, the 288-residue chain is Putative branched-chain-amino-acid aminotransferase (288 aa).

Lys146 is subject to N6-(pyridoxal phosphate)lysine.

This sequence belongs to the class-IV pyridoxal-phosphate-dependent aminotransferase family. Requires pyridoxal 5'-phosphate as cofactor.

The enzyme catalyses L-leucine + 2-oxoglutarate = 4-methyl-2-oxopentanoate + L-glutamate. The catalysed reaction is L-isoleucine + 2-oxoglutarate = (S)-3-methyl-2-oxopentanoate + L-glutamate. It catalyses the reaction L-valine + 2-oxoglutarate = 3-methyl-2-oxobutanoate + L-glutamate. It participates in amino-acid biosynthesis; L-isoleucine biosynthesis; L-isoleucine from 2-oxobutanoate: step 4/4. Its pathway is amino-acid biosynthesis; L-leucine biosynthesis; L-leucine from 3-methyl-2-oxobutanoate: step 4/4. The protein operates within amino-acid biosynthesis; L-valine biosynthesis; L-valine from pyruvate: step 4/4. Acts on leucine, isoleucine and valine. In Methanocaldococcus jannaschii (strain ATCC 43067 / DSM 2661 / JAL-1 / JCM 10045 / NBRC 100440) (Methanococcus jannaschii), this protein is Putative branched-chain-amino-acid aminotransferase (ilvE).